Here is a 190-residue protein sequence, read N- to C-terminus: Orotate phosphoribosyltransferase (190 aa).

114 to 122 provides a ligand contact to 5-phospho-alpha-D-ribose 1-diphosphate; that stretch reads EDVITTGGS. Residues Thr118 and Arg146 each coordinate orotate.

It belongs to the purine/pyrimidine phosphoribosyltransferase family. PyrE subfamily. Homodimer. The cofactor is Mg(2+).

It catalyses the reaction orotidine 5'-phosphate + diphosphate = orotate + 5-phospho-alpha-D-ribose 1-diphosphate. Its pathway is pyrimidine metabolism; UMP biosynthesis via de novo pathway; UMP from orotate: step 1/2. Catalyzes the transfer of a ribosyl phosphate group from 5-phosphoribose 1-diphosphate to orotate, leading to the formation of orotidine monophosphate (OMP). This chain is Orotate phosphoribosyltransferase, found in Caldicellulosiruptor bescii (strain ATCC BAA-1888 / DSM 6725 / KCTC 15123 / Z-1320) (Anaerocellum thermophilum).